A 696-amino-acid polypeptide reads, in one-letter code: Two-component response regulator ORR22 (696 aa).

A Response regulatory domain is found at 27–142; the sequence is RVLAVDDDPV…ELRNIWQHVV (116 aa). 4-aspartylphosphate is present on aspartate 78. The segment at 154 to 214 is disordered; the sequence is LDFSKECNKP…DYQENDEPSA (61 aa). Positions 176–185 are enriched in polar residues; that stretch reads TCGSSDQNGR. Residues 195–211 show a composition bias toward acidic residues; the sequence is GEDDDEGDDNDYQENDE. Positions 214 to 273 form a DNA-binding region, myb-like GARP; the sequence is AAKKPRVVWSVELHRKFVAAVNQLGIDKAVPKRILELMNVEKLTRENVASHLQKYRLYLK.

Belongs to the ARR family. Type-B subfamily. In terms of processing, two-component system major event consists of a His-to-Asp phosphorelay between a sensor histidine kinase (HK) and a response regulator (RR). In plants, the His-to-Asp phosphorelay involves an additional intermediate named Histidine-containing phosphotransfer protein (HPt). This multistep phosphorelay consists of a His-Asp-His-Asp sequential transfer of a phosphate group between first a His and an Asp of the HK protein, followed by the transfer to a conserved His of the HPt protein and finally the transfer to an Asp in the receiver domain of the RR protein.

The protein localises to the nucleus. In terms of biological role, transcriptional activator that binds specific DNA sequence. Functions as a response regulator involved in His-to-Asp phosphorelay signal transduction system. Phosphorylation of the Asp residue in the receiver domain activates the ability of the protein to promote the transcription of target genes. May directly activate some type-A response regulators in response to cytokinins. This is Two-component response regulator ORR22 from Oryza sativa subsp. indica (Rice).